Consider the following 145-residue polypeptide: Large ribosomal subunit protein uL13 (145 aa).

It belongs to the universal ribosomal protein uL13 family. As to quaternary structure, part of the 50S ribosomal subunit.

In terms of biological role, this protein is one of the early assembly proteins of the 50S ribosomal subunit, although it is not seen to bind rRNA by itself. It is important during the early stages of 50S assembly. The polypeptide is Large ribosomal subunit protein uL13 (Staphylococcus epidermidis (strain ATCC 35984 / DSM 28319 / BCRC 17069 / CCUG 31568 / BM 3577 / RP62A)).